The following is an 84-amino-acid chain: Cell division topological specificity factor (84 aa).

It belongs to the MinE family.

Prevents the cell division inhibition by proteins MinC and MinD at internal division sites while permitting inhibition at polar sites. This ensures cell division at the proper site by restricting the formation of a division septum at the midpoint of the long axis of the cell. This chain is Cell division topological specificity factor, found in Rhodopseudomonas palustris (strain BisA53).